Here is a 167-residue protein sequence, read N- to C-terminus: Peptidyl-prolyl cis-trans isomerase-like 3 (167 aa).

Positions 1–160 (MSVTLHTSHG…EPVRIENVTI (160 aa)) constitute a PPIase cyclophilin-type domain.

Belongs to the cyclophilin-type PPIase family. PPIL3 subfamily.

It carries out the reaction [protein]-peptidylproline (omega=180) = [protein]-peptidylproline (omega=0). Functionally, PPIases accelerate the folding of proteins. It catalyzes the cis-trans isomerization of proline imidic peptide bonds in oligopeptides. This Gibberella zeae (strain ATCC MYA-4620 / CBS 123657 / FGSC 9075 / NRRL 31084 / PH-1) (Wheat head blight fungus) protein is Peptidyl-prolyl cis-trans isomerase-like 3 (CYP10).